The primary structure comprises 1392 residues: Ankyrin repeat domain-containing protein 30B (1392 aa).

A disordered region spans residues 1-21; it reads MKRLLAAAGKGVRGPEPPNPF. 5 ANK repeats span residues 72-101, 105-134, 138-167, 171-200, and 204-233; these read KKRT…QLNV, EGRT…DLNY, YGNT…VIEV, ASLT…NANA, and SKCT…DVFA. 6 disordered regions span residues 265–292, 558–587, 636–656, 671–690, 830–877, and 904–926; these read PKNP…ERTP, AQMF…VSQK, DRET…PTCG, RETL…PTCG, KEGA…SDSE, and GKIE…QNSV. Composition is skewed to polar residues over residues 267 to 280 and 576 to 586; these read NPQN…STGT and DSESPCETVSQ. The segment covering 636 to 650 has biased composition (basic and acidic residues); sequence DRETFKAESPDKDGL. The span at 830 to 840 shows a compositional bias: polar residues; sequence KEGATKTVTGQ. 2 stretches are compositionally biased toward basic and acidic residues: residues 864–874 and 904–915; these read LGRKEDTKSTS and GKIEESPEKPSH. Coiled coils occupy residues 960-1168 and 1270-1318; these read RELK…KQDK and ETQC…QQLV.

As to expression, expressed in brain, breast and testis.

This is Ankyrin repeat domain-containing protein 30B (ANKRD30B) from Homo sapiens (Human).